We begin with the raw amino-acid sequence, 170 residues long: uncharacterized protein (170 aa).

This is an uncharacterized protein from Treponema pallidum (strain Nichols).